The following is a 438-amino-acid chain: Trigger factor (438 aa).

The 86-residue stretch at 163–248 (GDTAIIDFAG…VKEIKRKEIA (86 aa)) folds into the PPIase FKBP-type domain.

Belongs to the FKBP-type PPIase family. Tig subfamily.

It is found in the cytoplasm. The catalysed reaction is [protein]-peptidylproline (omega=180) = [protein]-peptidylproline (omega=0). Functionally, involved in protein export. Acts as a chaperone by maintaining the newly synthesized protein in an open conformation. Functions as a peptidyl-prolyl cis-trans isomerase. The sequence is that of Trigger factor from Pelotomaculum thermopropionicum (strain DSM 13744 / JCM 10971 / SI).